The chain runs to 358 residues: Cilia- and flagella-associated protein 263 (358 aa).

3 coiled-coil regions span residues 93–138 (YKKM…FKRN), 176–200 (RKNS…EMAE), and 266–343 (RTKL…YTKS).

The protein belongs to the CFAP263 family. Forms a complex with CFAP184; the interaction is required for functional activity in cilia. Interacts with HAP1 and PCM1.

It is found in the cytoplasm. The protein localises to the cytoskeleton. Its subcellular location is the microtubule organizing center. The protein resides in the centrosome. It localises to the centriolar satellite. It is found in the cell projection. The protein localises to the cilium. Its function is as follows. Component of centriolar satellites contributing to primary cilium formation. In complex with CFAP263, acts as a regulator of ciliary beating that connects radial spoke 3 (RS3) to the inner dynein arm (IDA) and the nexin-dynein regulatory complex (N-DRC). The complex is positioned parallel to N-DRC and forms a connection between the arch at the base of RS3, the IDA tail and N-DRC. This Danio rerio (Zebrafish) protein is Cilia- and flagella-associated protein 263 (cfap263).